The primary structure comprises 96 residues: MEQAPEDQGPQREPYNEWTLELLRKLKSEAVRHFPRIWLHGLGQHIYETYGDTWAGVEAIIRILQQLLFIHFRIGCRHSRIGIIQQRRSRNGSSRS.

The homooligomerization stretch occupies residues 1-42 (MEQAPEDQGPQREPYNEWTLELLRKLKSEAVRHFPRIWLHGL). Ser79, Ser94, and Ser96 each carry phosphoserine; by host.

The protein belongs to the HIV-1 VPR protein family. As to quaternary structure, homooligomer, may form homodimer. Interacts with p6-gag region of the Pr55 Gag precursor protein through a (Leu-X-X)4 motif near the C-terminus of the P6gag protein. Interacts with host UNG. May interact with host RAD23A/HHR23A. Interacts with host VPRBP/DCAF1, leading to hijack the CUL4A-RBX1-DDB1-DCAF1/VPRBP complex, mediating ubiquitination of host proteins such as TERT and ZGPAT and arrest of the cell cycle in G2 phase. Phosphorylated on several residues by host. These phosphorylations regulate VPR activity for the nuclear import of the HIV-1 pre-integration complex.

Its subcellular location is the virion. It localises to the host nucleus. It is found in the host extracellular space. Its function is as follows. During virus replication, may deplete host UNG protein, and incude G2-M cell cycle arrest. Acts by targeting specific host proteins for degradation by the 26S proteasome, through association with the cellular CUL4A-DDB1 E3 ligase complex by direct interaction with host VPRPB/DCAF-1. Cell cycle arrest reportedly occurs within hours of infection and is not blocked by antiviral agents, suggesting that it is initiated by the VPR carried into the virion. Additionally, VPR induces apoptosis in a cell cycle dependent manner suggesting that these two effects are mechanistically linked. Detected in the serum and cerebrospinal fluid of AIDS patient, VPR may also induce cell death to bystander cells. Functionally, during virus entry, plays a role in the transport of the viral pre-integration (PIC) complex to the host nucleus. This function is crucial for viral infection of non-dividing macrophages. May act directly at the nuclear pore complex, by binding nucleoporins phenylalanine-glycine (FG)-repeat regions. The sequence is that of Protein Vpr from Homo sapiens (Human).